Consider the following 626-residue polypeptide: Chaperone protein HtpG (626 aa).

The interval 1–331 (MSETVERHEF…TDDLPLNVSR (331 aa)) is a; substrate-binding. The tract at residues 332-544 (EMLQSTPTLQ…GMGPDLQMQR (213 aa)) is b. The interval 545-626 (LLRRAGRGFG…GTVAKPAESA (82 aa)) is c.

Belongs to the heat shock protein 90 family. In terms of assembly, homodimer.

It localises to the cytoplasm. Molecular chaperone. Has ATPase activity. This chain is Chaperone protein HtpG, found in Methylorubrum populi (strain ATCC BAA-705 / NCIMB 13946 / BJ001) (Methylobacterium populi).